A 573-amino-acid chain; its full sequence is Isocitrate dehydrogenase kinase/phosphatase (573 aa).

Residues 318 to 324 (APGVRGM) and lysine 339 each bind ATP. Aspartate 374 is an active-site residue.

It belongs to the AceK family.

The protein resides in the cytoplasm. It catalyses the reaction L-seryl-[isocitrate dehydrogenase] + ATP = O-phospho-L-seryl-[isocitrate dehydrogenase] + ADP + H(+). Its function is as follows. Bifunctional enzyme which can phosphorylate or dephosphorylate isocitrate dehydrogenase (IDH) on a specific serine residue. This is a regulatory mechanism which enables bacteria to bypass the Krebs cycle via the glyoxylate shunt in response to the source of carbon. When bacteria are grown on glucose, IDH is fully active and unphosphorylated, but when grown on acetate or ethanol, the activity of IDH declines drastically concomitant with its phosphorylation. The chain is Isocitrate dehydrogenase kinase/phosphatase from Stutzerimonas stutzeri (strain A1501) (Pseudomonas stutzeri).